Here is a 191-residue protein sequence, read N- to C-terminus: Potassium-transporting ATPase KdpC subunit (191 aa).

A helical transmembrane segment spans residues 10–30 (ITLVFCVFFSVFYILVLWLFA).

It belongs to the KdpC family. In terms of assembly, the system is composed of three essential subunits: KdpA, KdpB and KdpC.

Its subcellular location is the cell inner membrane. In terms of biological role, part of the high-affinity ATP-driven potassium transport (or Kdp) system, which catalyzes the hydrolysis of ATP coupled with the electrogenic transport of potassium into the cytoplasm. This subunit acts as a catalytic chaperone that increases the ATP-binding affinity of the ATP-hydrolyzing subunit KdpB by the formation of a transient KdpB/KdpC/ATP ternary complex. The sequence is that of Potassium-transporting ATPase KdpC subunit from Bacteroides fragilis (strain YCH46).